Here is a 469-residue protein sequence, read N- to C-terminus: Glutamate--tRNA ligase 1 (469 aa).

A 'HIGH' region motif is present at residues 10-20 (PSPTGYLHIGG). Zn(2+) contacts are provided by Cys-99, Cys-101, Cys-126, and Asp-128. A 'KMSKS' region motif is present at residues 237-241 (RLSKR). Lys-240 contributes to the ATP binding site.

It belongs to the class-I aminoacyl-tRNA synthetase family. Glutamate--tRNA ligase type 1 subfamily. As to quaternary structure, monomer. The cofactor is Zn(2+).

Its subcellular location is the cytoplasm. The enzyme catalyses tRNA(Glu) + L-glutamate + ATP = L-glutamyl-tRNA(Glu) + AMP + diphosphate. Its function is as follows. Catalyzes the attachment of glutamate to tRNA(Glu) in a two-step reaction: glutamate is first activated by ATP to form Glu-AMP and then transferred to the acceptor end of tRNA(Glu). The protein is Glutamate--tRNA ligase 1 of Coxiella burnetii (strain RSA 331 / Henzerling II).